The primary structure comprises 806 residues: Enhancer of polycomb-like protein 1 (806 aa).

2 disordered regions span residues 403 to 461 and 751 to 806; these read AITS…QEIG and SLQQ…NAAA. Residues 411-420 are compositionally biased toward basic residues; that stretch reads KRAKSSKSSK. The segment covering 421–439 has biased composition (basic and acidic residues); it reads LHKEDSGLYADEKGSEPKK. Residues 751–779 are compositionally biased toward low complexity; that stretch reads SLQQQQMLQKGQQPINNAPHSQSSSPPSH. The segment covering 785-795 has biased composition (polar residues); sequence NPGSTPNQSSP.

This sequence belongs to the enhancer of polycomb family. As to quaternary structure, component of the NuA4 histone acetyltransferase complex.

Its subcellular location is the nucleus. Component of the NuA4 histone acetyltransferase complex which is involved in transcriptional activation of selected genes principally by acetylation of nucleosomal histone H4 and H2A. The NuA4 complex is also involved in DNA repair. Involved in gene silencing by neighboring heterochromatin, blockage of the silencing spreading along the chromosome, and required for cell cycle progression through G2/M. The sequence is that of Enhancer of polycomb-like protein 1 (EPL1) from Kluyveromyces lactis (strain ATCC 8585 / CBS 2359 / DSM 70799 / NBRC 1267 / NRRL Y-1140 / WM37) (Yeast).